Here is a 205-residue protein sequence, read N- to C-terminus: Putative 3-methyladenine DNA glycosylase (205 aa).

It belongs to the DNA glycosylase MPG family.

The protein is Putative 3-methyladenine DNA glycosylase of Bacillus cereus (strain G9842).